The chain runs to 537 residues: Phosphoenolpyruvate carboxykinase (ATP) (537 aa).

Arg-61, Tyr-195, and Lys-201 together coordinate substrate. ATP is bound by residues Lys-201, His-220, and 236 to 244 (GLSGTGKTT). Mn(2+)-binding residues include Lys-201 and His-220. Residue Asp-257 coordinates Mn(2+). ATP contacts are provided by Glu-285, Arg-323, and Thr-448. Arg-323 provides a ligand contact to substrate.

The protein belongs to the phosphoenolpyruvate carboxykinase (ATP) family. The cofactor is Mn(2+).

It localises to the cytoplasm. The enzyme catalyses oxaloacetate + ATP = phosphoenolpyruvate + ADP + CO2. It participates in carbohydrate biosynthesis; gluconeogenesis. Its function is as follows. Involved in the gluconeogenesis. Catalyzes the conversion of oxaloacetate (OAA) to phosphoenolpyruvate (PEP) through direct phosphoryl transfer between the nucleoside triphosphate and OAA. This Rhodopseudomonas palustris (strain ATCC BAA-98 / CGA009) protein is Phosphoenolpyruvate carboxykinase (ATP).